We begin with the raw amino-acid sequence, 300 residues long: GTPase Era (300 aa).

The region spanning 4-173 (KYGIVAIVGK…INTIKQYLHK (170 aa)) is the Era-type G domain. A G1 region spans residues 12 to 19 (GKPNVGKS). Residue 12–19 (GKPNVGKS) coordinates GTP. Positions 38-42 (QTTRN) are G2. Positions 59–62 (DTPG) are G3. Residues 59–63 (DTPGF) and 122–125 (SKAE) contribute to the GTP site. Residues 122-125 (SKAE) are G4. Residues 152 to 154 (ISA) are G5. Residues 204 to 282 (LNHEVPHGVG…SLTIFVKVEN (79 aa)) enclose the KH type-2 domain.

This sequence belongs to the TRAFAC class TrmE-Era-EngA-EngB-Septin-like GTPase superfamily. Era GTPase family. Monomer.

It localises to the cytoplasm. The protein localises to the cell membrane. An essential GTPase that binds both GDP and GTP, with rapid nucleotide exchange. Plays a role in 16S rRNA processing and 30S ribosomal subunit biogenesis and possibly also in cell cycle regulation and energy metabolism. This chain is GTPase Era, found in Ureaplasma urealyticum serovar 10 (strain ATCC 33699 / Western).